The following is a 171-amino-acid chain: 3-hydroxydecanoyl-[acyl-carrier-protein] dehydratase (171 aa).

His-70 is a catalytic residue.

Belongs to the thioester dehydratase family. FabA subfamily. As to quaternary structure, homodimer.

It localises to the cytoplasm. It carries out the reaction a (3R)-hydroxyacyl-[ACP] = a (2E)-enoyl-[ACP] + H2O. The catalysed reaction is (3R)-hydroxydecanoyl-[ACP] = (2E)-decenoyl-[ACP] + H2O. It catalyses the reaction (2E)-decenoyl-[ACP] = (3Z)-decenoyl-[ACP]. It participates in lipid metabolism; fatty acid biosynthesis. Its function is as follows. Necessary for the introduction of cis unsaturation into fatty acids. Catalyzes the dehydration of (3R)-3-hydroxydecanoyl-ACP to E-(2)-decenoyl-ACP and then its isomerization to Z-(3)-decenoyl-ACP. Can catalyze the dehydratase reaction for beta-hydroxyacyl-ACPs with saturated chain lengths up to 16:0, being most active on intermediate chain length. This is 3-hydroxydecanoyl-[acyl-carrier-protein] dehydratase from Histophilus somni (strain 129Pt) (Haemophilus somnus).